A 103-amino-acid chain; its full sequence is Pyrimidine/purine nucleoside phosphorylase (103 aa).

It belongs to the nucleoside phosphorylase PpnP family.

It carries out the reaction a purine D-ribonucleoside + phosphate = a purine nucleobase + alpha-D-ribose 1-phosphate. The enzyme catalyses adenosine + phosphate = alpha-D-ribose 1-phosphate + adenine. The catalysed reaction is cytidine + phosphate = cytosine + alpha-D-ribose 1-phosphate. It catalyses the reaction guanosine + phosphate = alpha-D-ribose 1-phosphate + guanine. It carries out the reaction inosine + phosphate = alpha-D-ribose 1-phosphate + hypoxanthine. The enzyme catalyses thymidine + phosphate = 2-deoxy-alpha-D-ribose 1-phosphate + thymine. The catalysed reaction is uridine + phosphate = alpha-D-ribose 1-phosphate + uracil. It catalyses the reaction xanthosine + phosphate = alpha-D-ribose 1-phosphate + xanthine. Functionally, catalyzes the phosphorolysis of diverse nucleosides, yielding D-ribose 1-phosphate and the respective free bases. Can use uridine, adenosine, guanosine, cytidine, thymidine, inosine and xanthosine as substrates. Also catalyzes the reverse reactions. The protein is Pyrimidine/purine nucleoside phosphorylase of Shewanella baltica (strain OS155 / ATCC BAA-1091).